We begin with the raw amino-acid sequence, 554 residues long: Estrogen receptor beta (554 aa).

A modulating region spans residues 25-173 (TEIKNSPAGV…NPGSKKDAHF (149 aa)). 2 NR C4-type zinc fingers span residues 174–194 (CAVC…CEGC) and 210–234 (CPAT…LRKC). A DNA-binding region (nuclear receptor) is located at residues 174 to 239 (CAVCSDYASG…RLRKCYEVGM (66 aa)). The NR LBD domain occupies 289 to 521 (SPEQFVLTLL…DLLLEMLNAH (233 aa)). The tract at residues 529-554 (PLATHPEFGPLEQMEPGESLRKGEPQ) is disordered.

This sequence belongs to the nuclear hormone receptor family. NR3 subfamily. As to quaternary structure, binds DNA as a homodimer. Can form a heterodimer with ER-alpha. As to expression, brain, pituitary, skeletal muscle, liver, adrenal, kidney, intestine and ovary.

Its subcellular location is the nucleus. Its function is as follows. Binds estrogens with an affinity similar to that of ER-alpha, and activates expression of reporter genes containing estrogen response elements (ERE) in an estrogen-dependent manner. Locally synthesized estrogens may act via ER beta, in addition to ER alpha, to mediate seasonal or developmental effects on nearby song nuclei. In Sturnus vulgaris (Starling), this protein is Estrogen receptor beta (ESR2).